The following is a 461-amino-acid chain: Ribosomal protein uS12 methylthiotransferase RimO (461 aa).

The 116-residue stretch at 13 to 128 folds into the MTTase N-terminal domain; the sequence is PKVGFVSLGC…VMQHVHTHLP (116 aa). The [4Fe-4S] cluster site is built by cysteine 22, cysteine 58, cysteine 87, cysteine 159, cysteine 163, and cysteine 166. Positions 145–390 constitute a Radical SAM core domain; the sequence is LTPRHYAYLK…MEVAEEVSAK (246 aa). The TRAM domain occupies 393 to 461; sequence AKKVGKTLKV…ADGHDLWGEV (69 aa).

Belongs to the methylthiotransferase family. RimO subfamily. [4Fe-4S] cluster is required as a cofactor.

The protein localises to the cytoplasm. It carries out the reaction L-aspartate(89)-[ribosomal protein uS12]-hydrogen + (sulfur carrier)-SH + AH2 + 2 S-adenosyl-L-methionine = 3-methylsulfanyl-L-aspartate(89)-[ribosomal protein uS12]-hydrogen + (sulfur carrier)-H + 5'-deoxyadenosine + L-methionine + A + S-adenosyl-L-homocysteine + 2 H(+). Functionally, catalyzes the methylthiolation of an aspartic acid residue of ribosomal protein uS12. The sequence is that of Ribosomal protein uS12 methylthiotransferase RimO from Paraburkholderia phytofirmans (strain DSM 17436 / LMG 22146 / PsJN) (Burkholderia phytofirmans).